Reading from the N-terminus, the 550-residue chain is Cochlin (550 aa).

Residues 1–24 (MSAAWIPALGLGVCLLLLPGPAGS) form the signal peptide. The region spanning 28–121 (APIAITCFTR…QMLSRWSASF (94 aa)) is the LCCL domain. 2 disulfide bridges follow: C34/C50 and C54/C74. N-linked (GlcNAc...) asparagine glycosylation occurs at N100. The span at 128–139 (SSTQEATGQAVS) shows a compositional bias: polar residues. Positions 128 to 159 (SSTQEATGQAVSTAHPPTGKRLKKTPEKKTGN) are disordered. VWFA domains are found at residues 165–346 (DIAF…VKPL) and 367–537 (NIAF…VSDV). N221 carries an N-linked (GlcNAc...) asparagine glycan.

In terms of assembly, monomer. May form homodimer. Interacts with type II collagen. Interacts with SLC44A2. Interacts with ANXA2. N-glycosylated. Post-translationally, a 50 kDa form is created by proteolytic cleavage. Expressed in inner ear structures; the cochlea and the vestibule.

It is found in the secreted. It localises to the extracellular space. Its subcellular location is the extracellular matrix. Functionally, plays a role in the control of cell shape and motility in the trabecular meshwork. The polypeptide is Cochlin (COCH) (Homo sapiens (Human)).